The following is a 275-amino-acid chain: Aliphatic sulfonates import ATP-binding protein SsuB 1 (275 aa).

The 227-residue stretch at 34–260 (ISLTGLEKSF…RHGHPGLCEL (227 aa)) folds into the ABC transporter domain. 66–73 (GKSGCGKS) lines the ATP pocket.

It belongs to the ABC transporter superfamily. Aliphatic sulfonates importer (TC 3.A.1.17.2) family. The complex is composed of two ATP-binding proteins (SsuB), two transmembrane proteins (SsuC) and a solute-binding protein (SsuA).

It localises to the cell inner membrane. The catalysed reaction is ATP + H2O + aliphatic sulfonate-[sulfonate-binding protein]Side 1 = ADP + phosphate + aliphatic sulfonateSide 2 + [sulfonate-binding protein]Side 1.. Part of the ABC transporter complex SsuABC involved in aliphatic sulfonates import. Responsible for energy coupling to the transport system. The protein is Aliphatic sulfonates import ATP-binding protein SsuB 1 of Rhizobium johnstonii (strain DSM 114642 / LMG 32736 / 3841) (Rhizobium leguminosarum bv. viciae).